The following is an 891-amino-acid chain: Targeting protein for Xklp2 homolog (891 aa).

Over residues 42-54 (HENGVPLTFDDKA) the composition is skewed to basic and acidic residues. Disordered stretches follow at residues 42 to 310 (HENG…KSCP), 418 to 454 (NLRK…SFSG), 472 to 518 (HTKT…NRHR), 723 to 746 (CSGV…AEKG), and 789 to 891 (STKP…SHTS). The segment covering 108-124 (DDVSSAESETCEMSTDS) has biased composition (polar residues). The span at 141-154 (DDEATVQESSDAEE) shows a compositional bias: acidic residues. Over residues 155–173 (TQTLPSSCVDSSTAEMSTD) the composition is skewed to polar residues. The segment covering 236 to 246 (PTRKSPRLHSR) has biased composition (basic residues). A compositionally biased stretch (basic and acidic residues) spans 442 to 454 (DNRKRTHEESFSG). A compositionally biased stretch (polar residues) spans 791–802 (KPMTDISNFSLN). Composition is skewed to basic and acidic residues over residues 803-822 (TERR…ERQL) and 831-852 (REAE…DSIH).

It belongs to the TPX2 family. Detectable in immature oocytes.

The protein resides in the nucleus. The protein localises to the cytoplasm. Its subcellular location is the cytoskeleton. It localises to the spindle. Its function is as follows. Spindle assembly factor. Required for normal assembly of mitotic spindles. The chain is Targeting protein for Xklp2 homolog from Patiria pectinifera (Starfish).